We begin with the raw amino-acid sequence, 638 residues long: Trichohyalin-like protein 1 (638 aa).

Residues 49–84 (HVFHAVERKLNLLNFDRDGTISFEEFVLAIFSLLNP) enclose the EF-hand domain. The segment at 134–638 (SEMASSGQPS…ALEAESLEAQ (505 aa)) is disordered. Positions 166 to 179 (LPRNVSEPNDPENQ) are enriched in polar residues. Composition is skewed to basic and acidic residues over residues 221 to 246 (IPRERSKPSRRLSDTKISDHMIQRPT), 294 to 309 (DDTKLSEAQETGKDAG), and 318 to 328 (EEPKADAKVAE). Residues 343 to 357 (DQSVQSRSRNVSETS) are compositionally biased toward polar residues. Composition is skewed to basic and acidic residues over residues 358-372 (SRGEQEGEWKEHERI), 395-409 (RENDAKKDSAAKDPS), 419-435 (EIKEDSVSGKEARHSEE), 479-490 (RIQDKPVRKEDH), 526-548 (AEPHVPEDSQSQIDHHGDAKQES), and 622-631 (AGRENRKALE).

It belongs to the S-100 family.

This Mus musculus (Mouse) protein is Trichohyalin-like protein 1 (Tchhl1).